The sequence spans 400 residues: Serine/threonine transporter SstT (400 aa).

8 helical membrane passes run 14–34, 48–68, 76–96, 136–156, 177–197, 211–231, 293–313, and 334–354; these read IIIA…VTPY, SVAP…FQVG, VLLL…IASL, AISE…GLAM, IIHK…AVTF, LLAV…PILV, LAGA…TLGI, and ASGV…LFGI.

Belongs to the dicarboxylate/amino acid:cation symporter (DAACS) (TC 2.A.23) family.

Its subcellular location is the cell inner membrane. The catalysed reaction is L-serine(in) + Na(+)(in) = L-serine(out) + Na(+)(out). It carries out the reaction L-threonine(in) + Na(+)(in) = L-threonine(out) + Na(+)(out). Functionally, involved in the import of serine and threonine into the cell, with the concomitant import of sodium (symport system). The chain is Serine/threonine transporter SstT from Acinetobacter baumannii (strain SDF).